The primary structure comprises 247 residues: Fibroblast growth factor 14 (247 aa).

2 disordered regions span residues 1-37 (MAAA…SKNR) and 216-247 (ETVP…CKTT). Residues 15-25 (QAREQHWDRPS) show a composition bias toward basic and acidic residues.

It belongs to the heparin-binding growth factors family. Interacts with SCN8A. In terms of tissue distribution, brain and testis; widely distributed in the developing nervous system. In adult, high levels in the granular layer of the cerebellum, less in hippocampus and olfactory bulb.

The protein resides in the nucleus. Its function is as follows. Probably involved in nervous system development and function. In Mus musculus (Mouse), this protein is Fibroblast growth factor 14 (Fgf14).